The primary structure comprises 203 residues: Regulator of free ubiquitin chains 1 (203 aa).

Belongs to the RFU1 family.

The protein resides in the endosome. Inhibitor of the DOA4 deubiquitinase involved in the regulation of protein degradation by the proteasome and maintenance of a normal level of free ubiquitin. The sequence is that of Regulator of free ubiquitin chains 1 (RFU1) from Candida glabrata (strain ATCC 2001 / BCRC 20586 / JCM 3761 / NBRC 0622 / NRRL Y-65 / CBS 138) (Yeast).